The primary structure comprises 430 residues: Adenylosuccinate synthetase (430 aa).

Residues 12–18 and 40–42 each bind GTP; these read GDEGKGK and GHT. Catalysis depends on aspartate 13, which acts as the Proton acceptor. Aspartate 13 and glycine 40 together coordinate Mg(2+). IMP-binding positions include 13-16, 38-41, threonine 128, arginine 142, glutamine 223, threonine 238, and arginine 302; these read DEGK and NAGH. Residue histidine 41 is the Proton donor of the active site. Substrate is bound at residue 298–304; it reads TTTGRPR. Residues arginine 304, 330 to 332, and 412 to 414 contribute to the GTP site; these read SID and SVG.

The protein belongs to the adenylosuccinate synthetase family. In terms of assembly, homodimer. It depends on Mg(2+) as a cofactor.

It localises to the cytoplasm. The enzyme catalyses IMP + L-aspartate + GTP = N(6)-(1,2-dicarboxyethyl)-AMP + GDP + phosphate + 2 H(+). It functions in the pathway purine metabolism; AMP biosynthesis via de novo pathway; AMP from IMP: step 1/2. In terms of biological role, plays an important role in the de novo pathway of purine nucleotide biosynthesis. Catalyzes the first committed step in the biosynthesis of AMP from IMP. This Streptococcus pyogenes serotype M12 (strain MGAS9429) protein is Adenylosuccinate synthetase.